The primary structure comprises 393 residues: Protein shisa-9B (393 aa).

Positions 1-20 (MKSTGLLLGYFLMKVLVCDA) are cleaved as a signal peptide. Residues 21–131 (EGEPGKSLDG…MDQHDPTKDK (111 aa)) are Extracellular-facing. Positions 28–52 (LDGAVTASGSNDSRDGENGLSETPH) are disordered. N-linked (GlcNAc...) asparagine glycosylation occurs at Asn-38. A helical transmembrane segment spans residues 132–152 (TNLIVYIICGVVAIMALVGIF). Topologically, residues 153–393 (TKLGLEKAHR…VTNSKTEVTV (241 aa)) are cytoplasmic. Residues 307–340 (QKQNGHKSKSTKVHSSHPLAYGSNTIANPGRMSS) are disordered. Basic residues predominate over residues 310–321 (NGHKSKSTKVHS).

Belongs to the shisa family. SHISA9 subfamily. Component of some AMPA receptors (ionotropic glutamate receptors) complex.

The protein localises to the cell projection. It is found in the dendritic spine membrane. Its subcellular location is the synapse. Functionally, regulator of short-term neuronal synaptic plasticity in the dentate gyrus. Associates with AMPA receptors (ionotropic glutamate receptors) in synaptic spines and promotes AMPA receptor desensitization at excitatory synapses. The chain is Protein shisa-9B (shisa9b) from Danio rerio (Zebrafish).